The chain runs to 447 residues: Methionine aminopeptidase 2-2 (447 aa).

Residues Met1 to Pro89 form a disordered region. Residues Asn15–Gly30 are compositionally biased toward polar residues. Residues Asp34–Asp47 are compositionally biased toward acidic residues. Residues Lys59–Ala73 show a composition bias toward basic residues. Residue His197 participates in substrate binding. Residues Asp217, Asp228, and His297 each coordinate a divalent metal cation. His305 is a binding site for substrate. A divalent metal cation is bound by residues Glu333 and Glu428.

It belongs to the peptidase M24A family. Methionine aminopeptidase eukaryotic type 2 subfamily. Co(2+) serves as cofactor. It depends on Zn(2+) as a cofactor. The cofactor is Mn(2+). Fe(2+) is required as a cofactor.

It is found in the cytoplasm. The enzyme catalyses Release of N-terminal amino acids, preferentially methionine, from peptides and arylamides.. Functionally, cotranslationally removes the N-terminal methionine from nascent proteins. The N-terminal methionine is often cleaved when the second residue in the primary sequence is small and uncharged (Met-Ala-, Cys, Gly, Pro, Ser, Thr, or Val). This Arthroderma otae (strain ATCC MYA-4605 / CBS 113480) (Microsporum canis) protein is Methionine aminopeptidase 2-2.